Reading from the N-terminus, the 63-residue chain is Large ribosomal subunit protein uL29 (63 aa).

The protein belongs to the universal ribosomal protein uL29 family.

This chain is Large ribosomal subunit protein uL29, found in Yersinia enterocolitica serotype O:8 / biotype 1B (strain NCTC 13174 / 8081).